The chain runs to 259 residues: MKEHKARKRFGQNFLQDTRIIGDIVNAVRPQADDVVIEIGPGLAAITEPLAKKLNRLHVVEIDRDIVCRLKTLPFADKLVIHEGDVLQFDFNGISGKKKIVGNLPYNISTPLLFKLAEVADDVADMHFMLQKEVVERMVAAPKSNDYGRLGVMLQYFFDMELLIDVPPESFDPAPKIDSAVVRMIPVKHRIGKADDFEHFAKLVKLAFRQRRKTIRNNLKELADDDDLQAVGISPQDRAEHIAPEKYVALSNYLADKAV.

Asn13, Leu15, Gly40, Glu61, Asp85, and Asn103 together coordinate S-adenosyl-L-methionine.

It belongs to the class I-like SAM-binding methyltransferase superfamily. rRNA adenine N(6)-methyltransferase family. RsmA subfamily.

It localises to the cytoplasm. It carries out the reaction adenosine(1518)/adenosine(1519) in 16S rRNA + 4 S-adenosyl-L-methionine = N(6)-dimethyladenosine(1518)/N(6)-dimethyladenosine(1519) in 16S rRNA + 4 S-adenosyl-L-homocysteine + 4 H(+). Specifically dimethylates two adjacent adenosines (A1518 and A1519) in the loop of a conserved hairpin near the 3'-end of 16S rRNA in the 30S particle. May play a critical role in biogenesis of 30S subunits. This is Ribosomal RNA small subunit methyltransferase A from Neisseria gonorrhoeae (strain NCCP11945).